Reading from the N-terminus, the 315-residue chain is Ankyrin repeat domain-containing protein EMB506, chloroplastic (315 aa).

The N-terminal 39 residues, 1–39 (MVSSVLSIPPQTCLLPRLPISDSVNCKSKIVYCLSTSVR), are a transit peptide targeting the chloroplast. Polar residues predominate over residues 44-65 (KRQSTARTRSFTETNRRTPSVQ). The interval 44–106 (KRQSTARTRS…DNESDWEDDS (63 aa)) is disordered. Residues 72–104 (EDPDDGSDSENEYEGEEEDGIGNDLDNESDWED) are compositionally biased toward acidic residues. ANK repeat units lie at residues 151–180 (KSWK…DIDD), 184–213 (DNQT…NPHL), 217–246 (DGAA…DVNV), 250–279 (EGWT…DKTR), and 283–307 (DGKL…VKLL).

As to quaternary structure, interacts with AKR. No homodimerization observed. As to expression, expressed in roots, inflorescence stems, flowers, siliques, dry seeds and mature cauline leaves.

The protein resides in the plastid. Its subcellular location is the chloroplast. In terms of biological role, involved in the initial differentiation of the proplastid during the embryo development. Also required for correct cotyledon, true leaf and cauline leaf margin development. The protein is Ankyrin repeat domain-containing protein EMB506, chloroplastic (EMB506) of Arabidopsis thaliana (Mouse-ear cress).